Here is a 398-residue protein sequence, read N- to C-terminus: Nicotinate phosphoribosyltransferase (398 aa).

Histidine 222 carries the phosphohistidine; by autocatalysis modification.

It belongs to the NAPRTase family. In terms of processing, transiently phosphorylated on a His residue during the reaction cycle. Phosphorylation strongly increases the affinity for substrates and increases the rate of nicotinate D-ribonucleotide production. Dephosphorylation regenerates the low-affinity form of the enzyme, leading to product release.

The enzyme catalyses nicotinate + 5-phospho-alpha-D-ribose 1-diphosphate + ATP + H2O = nicotinate beta-D-ribonucleotide + ADP + phosphate + diphosphate. The protein operates within cofactor biosynthesis; NAD(+) biosynthesis; nicotinate D-ribonucleotide from nicotinate: step 1/1. Functionally, catalyzes the synthesis of beta-nicotinate D-ribonucleotide from nicotinate and 5-phospho-D-ribose 1-phosphate at the expense of ATP. This is Nicotinate phosphoribosyltransferase from Acidovorax ebreus (strain TPSY) (Diaphorobacter sp. (strain TPSY)).